The sequence spans 445 residues: Chromosome partition protein MukF (445 aa).

The tract at residues 213-241 is leucine-zipper; sequence LSETSSTLRELQDTLQAASDELQTQILDI.

It belongs to the MukF family. In terms of assembly, interacts, and probably forms a ternary complex, with MukE and MukB via its C-terminal region. The complex formation is stimulated by calcium or magnesium. It is required for an interaction between MukE and MukB.

The protein resides in the cytoplasm. Its subcellular location is the nucleoid. In terms of biological role, involved in chromosome condensation, segregation and cell cycle progression. May participate in facilitating chromosome segregation by condensation DNA from both sides of a centrally located replisome during cell division. Not required for mini-F plasmid partitioning. Probably acts via its interaction with MukB and MukE. Overexpression results in anucleate cells. It has a calcium binding activity. This chain is Chromosome partition protein MukF, found in Vibrio campbellii (strain ATCC BAA-1116).